Reading from the N-terminus, the 601-residue chain is Casbene synthase, chloroplastic (601 aa).

A chloroplast-targeting transit peptide spans 1–56; that stretch reads MALPSAAMQSNPEKLNLFHRLSSLPTTSLEYGNNRFPFFSSSAKSHFKKPTQACLS. Mg(2+) contacts are provided by D355, D359, N499, S503, and E507. The short motif at 355 to 359 is the DDXXD motif element; that stretch reads DDTID.

This sequence belongs to the terpene synthase family. It depends on Mg(2+) as a cofactor.

The protein localises to the plastid. Its subcellular location is the chloroplast. It carries out the reaction (2E,6E,10E)-geranylgeranyl diphosphate = casbene + diphosphate. Its function is as follows. Catalyzes the cyclization of geranylgeranyl diphosphate to casbene, a diterpene phytoalexin with antibacterial and antifungal activity. The sequence is that of Casbene synthase, chloroplastic from Ricinus communis (Castor bean).